A 232-amino-acid polypeptide reads, in one-letter code: MEKIKVKEIFNNVYSVDFGDGLKRIATKSLVPGKRVYGEKLVYSDSIEYRVWNPNKSKLGAAIINGLKKMPIKKGTKVLYLGASAGTTPSHVADIAENSLVYALEFAPRIMREFIDSCNERKNLIPVLGDANRPQDYSNIVEKVDVIFEDVAQPNQAEILVKNARWFLKENGYAMISIKARSVDVTKNPREIFAEQKKILIEGGFEIVDEINIEPFEKDHMMMVGIWNETKY.

Residues 87-88 (TT), 105-106 (EF), 130-131 (DA), and 150-153 (DVAQ) each bind S-adenosyl-L-methionine.

It belongs to the methyltransferase superfamily. Fibrillarin family. As to quaternary structure, interacts with nop5. Component of box C/D small ribonucleoprotein (sRNP) particles that contain rpl7ae, FlpA and nop5, plus a guide RNA.

In terms of biological role, involved in pre-rRNA and tRNA processing. Utilizes the methyl donor S-adenosyl-L-methionine to catalyze the site-specific 2'-hydroxyl methylation of ribose moieties in rRNA and tRNA. Site specificity is provided by a guide RNA that base pairs with the substrate. Methylation occurs at a characteristic distance from the sequence involved in base pairing with the guide RNA. This Methanococcus maripaludis (strain C7 / ATCC BAA-1331) protein is Fibrillarin-like rRNA/tRNA 2'-O-methyltransferase.